The primary structure comprises 531 residues: Peptide chain release factor 3 (531 aa).

The 270-residue stretch at 13-282 (AKRRTFAIIS…TLIKYSPPPK (270 aa)) folds into the tr-type G domain. GTP-binding positions include 22-29 (SHPDAGKT), 90-94 (DTPGH), and 144-147 (NKLD).

This sequence belongs to the TRAFAC class translation factor GTPase superfamily. Classic translation factor GTPase family. PrfC subfamily.

It is found in the cytoplasm. Its function is as follows. Increases the formation of ribosomal termination complexes and stimulates activities of RF-1 and RF-2. It binds guanine nucleotides and has strong preference for UGA stop codons. It may interact directly with the ribosome. The stimulation of RF-1 and RF-2 is significantly reduced by GTP and GDP, but not by GMP. This is Peptide chain release factor 3 from Psychrobacter arcticus (strain DSM 17307 / VKM B-2377 / 273-4).